The chain runs to 238 residues: Lipoprotein-releasing system ATP-binding protein LolD (238 aa).

The ABC transporter domain occupies 6 to 238 (LVCQGIRKVY…RSSLAQEMEA (233 aa)). Position 42–49 (42–49 (GSSGSGKS)) interacts with ATP.

The protein belongs to the ABC transporter superfamily. Lipoprotein translocase (TC 3.A.1.125) family. In terms of assembly, the complex is composed of two ATP-binding proteins (LolD) and two transmembrane proteins (LolC and LolE).

Its subcellular location is the cell inner membrane. Its function is as follows. Part of the ABC transporter complex LolCDE involved in the translocation of mature outer membrane-directed lipoproteins, from the inner membrane to the periplasmic chaperone, LolA. Responsible for the formation of the LolA-lipoprotein complex in an ATP-dependent manner. The polypeptide is Lipoprotein-releasing system ATP-binding protein LolD (Aliivibrio fischeri (strain ATCC 700601 / ES114) (Vibrio fischeri)).